Here is a 211-residue protein sequence, read N- to C-terminus: Pyridoxine/pyridoxamine 5'-phosphate oxidase (211 aa).

Residues 7–10 (RTDY) and lysine 65 each bind substrate. Residues 60–65 (RILLIK), 75–76 (FT), arginine 81, and lysine 82 contribute to the FMN site. Substrate contacts are provided by tyrosine 122, arginine 126, and serine 130. Residues 139 to 140 (QS) and tryptophan 183 each bind FMN. Residue 189-191 (RLH) coordinates substrate. Residue arginine 193 coordinates FMN.

This sequence belongs to the pyridoxamine 5'-phosphate oxidase family. In terms of assembly, homodimer. Requires FMN as cofactor.

It catalyses the reaction pyridoxamine 5'-phosphate + O2 + H2O = pyridoxal 5'-phosphate + H2O2 + NH4(+). The enzyme catalyses pyridoxine 5'-phosphate + O2 = pyridoxal 5'-phosphate + H2O2. The protein operates within cofactor metabolism; pyridoxal 5'-phosphate salvage; pyridoxal 5'-phosphate from pyridoxamine 5'-phosphate: step 1/1. It functions in the pathway cofactor metabolism; pyridoxal 5'-phosphate salvage; pyridoxal 5'-phosphate from pyridoxine 5'-phosphate: step 1/1. Catalyzes the oxidation of either pyridoxine 5'-phosphate (PNP) or pyridoxamine 5'-phosphate (PMP) into pyridoxal 5'-phosphate (PLP). In Janthinobacterium sp. (strain Marseille) (Minibacterium massiliensis), this protein is Pyridoxine/pyridoxamine 5'-phosphate oxidase.